The chain runs to 902 residues: Chloride channel protein 2 (902 aa).

At 1–89 the chain is on the cytoplasmic side; sequence MAASAAAAGE…RCHKFLVSRV (89 aa). An essential for channel gating by both voltage and cell volume region spans residues 18–36; it reads QYEQTLMYGRYTQELGAFA. Thr-22 is modified (phosphothreonine). Positions 38–51 are modulates channel gating by both voltage and cell volume; it reads EEAARIRLGGPEPW. A run of 2 helical transmembrane segments spans residues 90-123 and 132-157; these read GEDWIFLVLLGLLMALVSWAMDYAIAVCLQAQQW and ILLQYLAWVTYPVVLITFSAGFTQIL. The Selectivity filter part_1 motif lies at 163-167; it reads GSGIP. Positions 166–173 form an intramembrane region, helical; sequence IPEMKTIL. Transmembrane regions (helical) follow at residues 182-200 and 207-225; these read LTLKTFVAKVIGLTCALGS and EGPFVHIASMCASLLSKFL. Residues 205 to 209 carry the Selectivity filter part_2 motif; sequence GKEGP. 2 consecutive intramembrane regions (helical) follow at residues 241 to 253 and 257 to 265; these read MLAAACAVGVGCC and PIGGVLFSI. 5 helical membrane passes run 277-297, 323-351, 360-379, 431-451, and 459-482; these read YWRGFFSATFSAFIFRVLAVW, LPAFAVIGIASGFGGALFVYLNRKIVQVM, FLMRKRLLFPALVTLLISTL, ANVFLTLVIFILMKFWMSALA, and GAFMPVFVIGAAFGRLVGESMAAW. The Selectivity filter part_3 signature appears at 459-463; the sequence is GAFMP. Positions 499 to 513 form an intramembrane region, helical; the sequence is GGYAVVGAAALAGAV. Positions 514 to 515 form an intramembrane region, note=Loop between two helices; sequence TH. Residues 516 to 527 constitute an intramembrane region (helical); it reads TVSTAVIVFELT. The segment at residues 528 to 532 is an intramembrane region (note=Loop between two helices); that stretch reads GQIAH. A helical membrane pass occupies residues 533–550; it reads ILPVMIAVILANAVAQSL. Residues 551 to 902 lie on the Cytoplasmic side of the membrane; sequence QPSLYDSIIR…SPSDSDDKCQ (352 aa). Residues 586 to 644 enclose the CBS 1 domain; the sequence is MVRDVPYVALNCTFRDLRLALHRTKGRMLALVESSESMILLGSIERSQVVTLLGAQLSA. Positions 648 to 748 are disordered; sequence RQHIQERRKA…TSDLEKPESC (101 aa). 2 stretches are compositionally biased toward polar residues: residues 671–683 and 706–719; these read PESSVHFQVNTED and SNASKAGETSTGSM. The region spanning 794–854 is the CBS 2 domain; that stretch reads IDPAPFQLVE…GSVTAQGVKV (61 aa). The Basolateral membrane sorting signature appears at 816-817; sequence LL. The disordered stretch occupies residues 860 to 902; that stretch reads SFRDSATSSSDTETTEVHALWGPHSCHGLPRDGSPSDSDDKCQ.

The protein belongs to the chloride channel (TC 2.A.49) family. ClC-2/CLCN2 subfamily. Homodimer. Interacts with auxiliary subunit HEPACAM.

The protein resides in the cell membrane. Its subcellular location is the basolateral cell membrane. The protein localises to the cell projection. It localises to the dendritic spine membrane. It is found in the axon. The enzyme catalyses chloride(in) = chloride(out). It carries out the reaction thiocyanate(in) = thiocyanate(out). It catalyses the reaction bromide(in) = bromide(out). The catalysed reaction is nitrate(in) = nitrate(out). The enzyme catalyses iodide(out) = iodide(in). Its activity is regulated as follows. Common gate kinetics are down-regulated by intracellular ATP. Inhibited by AK-42, a derivative of meclofenamate. Inhibited by Cd(2+). Inhibited by Zn(2+) and PKC activation. Inhibited at acidic pH. CCLN2:HEPACAM channel conductance is up-regulated upon hypo-osmolarity. In terms of biological role, voltage-gated and osmosensitive chloride channel. Forms a homodimeric channel where each subunit has its own ion conduction pathway. Conducts double-barreled currents controlled by two types of gates, two fast glutamate gates that control each subunit independently and a slow common gate that opens and shuts off both subunits simultaneously. Displays inward rectification currents activated upon membrane hyperpolarization and extracellular hypotonicity. Contributes to chloride conductance involved in neuron excitability. In hippocampal neurons, generates a significant part of resting membrane conductance and provides an additional chloride efflux pathway to prevent chloride accumulation in dendrites upon GABA receptor activation. In glia, associates with the auxiliary subunit HEPACAM/GlialCAM at astrocytic processes and myelinated fiber tracts where it may regulate transcellular chloride flux buffering extracellular chloride and potassium concentrations. Regulates aldosterone production in adrenal glands. The opening of CLCN2 channels at hyperpolarized membrane potentials in the glomerulosa causes cell membrane depolarization, activation of voltage-gated calcium channels and increased expression of aldosterone synthase, the rate-limiting enzyme for aldosterone biosynthesis. Contributes to chloride conductance in retinal pigment epithelium involved in phagocytosis of shed photoreceptor outer segments and photoreceptor renewal. Conducts chloride currents at the basolateral membrane of epithelial cells with a role in chloride reabsorption rather than secretion. Permeable to small monovalent anions with chloride &gt; thiocyanate &gt; bromide &gt; nitrate &gt; iodide ion selectivity. In Cavia porcellus (Guinea pig), this protein is Chloride channel protein 2 (CLCN2).